We begin with the raw amino-acid sequence, 214 residues long: uncharacterized protein (214 aa).

The transit peptide at 1 to 49 (MATRGAVAAAASTIWKHRRNPSLRSLSRHFNPNFNHRIIPTGFKYQVRA) directs the protein to the chloroplast.

Its subcellular location is the plastid. It is found in the chloroplast. This is an uncharacterized protein from Arabidopsis thaliana (Mouse-ear cress).